Consider the following 80-residue polypeptide: Protein YibX (80 aa).

The chain is Protein YibX from Escherichia coli (strain K12).